A 1042-amino-acid polypeptide reads, in one-letter code: Ribosome biogenesis protein NOC1 (1042 aa).

Disordered regions lie at residues 1–20 (MGLK…AFDE), 28–79 (GKID…AAKD), 101–128 (LVAD…SLDQ), 148–214 (NRED…IPQD), 546–567 (LNGD…GSLT), and 897–1020 (GKMT…LKTL). Composition is skewed to basic and acidic residues over residues 9–18 (QQRDIGKPAF) and 63–79 (HPTE…AAKD). Polar residues predominate over residues 118 to 128 (PKISSEQSLDQ). 2 stretches are compositionally biased toward acidic residues: residues 153–164 (NTEDEASPDEDA) and 173–194 (SDSD…SFSD). The span at 195-207 (NEEKVTEKVDSGE) shows a compositional bias: basic and acidic residues. Residues 902–911 (KRDETKREFG) show a composition bias toward basic and acidic residues. Residues 937–957 (NVDDDSDADLGDFDYSDDEED) show a composition bias toward acidic residues. Residues 962-972 (DGSMSDIGMDS) are compositionally biased toward low complexity. The span at 978 to 994 (IFDDAGESDEQSSGEDE) shows a compositional bias: acidic residues.

This sequence belongs to the CBF/MAK21 family. As to quaternary structure, interacts with NOC2. Forms a nucleolar complex with NOC2 that binds to 90S and 66S pre-ribosomes.

It is found in the nucleus. It localises to the nucleolus. Required for 60S ribosomal subunit synthesis. The chain is Ribosome biogenesis protein NOC1 (NOC1) from Chaetomium thermophilum (strain DSM 1495 / CBS 144.50 / IMI 039719) (Thermochaetoides thermophila).